The chain runs to 201 residues: uncharacterized protein (201 aa).

This is an uncharacterized protein from Acanthamoeba polyphaga mimivirus (APMV).